Consider the following 214-residue polypeptide: Glucose-6-phosphate isomerase (214 aa).

Positions 92, 94, 101, and 140 each coordinate Fe cation.

It belongs to the archaeal-type GPI family. As to quaternary structure, homodimer.

It localises to the cytoplasm. It catalyses the reaction alpha-D-glucose 6-phosphate = beta-D-fructose 6-phosphate. It functions in the pathway carbohydrate degradation; glycolysis; D-glyceraldehyde 3-phosphate and glycerone phosphate from D-glucose: step 2/4. The sequence is that of Glucose-6-phosphate isomerase from Sinorhizobium medicae (strain WSM419) (Ensifer medicae).